A 462-amino-acid polypeptide reads, in one-letter code: Myb-like transcriptional regulator mfmK (462 aa).

3 consecutive HTH myb-type domains span residues M1–S54, A56–I110, and C113–E162. 3 consecutive DNA-binding regions (H-T-H motif) follow at residues W32 to W52, W83 to L106, and W134 to R158. A compositionally biased stretch (basic and acidic residues) spans L159–V175. Disordered stretches follow at residues L159 to P184, D216 to G262, and S374 to I408. Acidic residues predominate over residues D216–D235. 2 stretches are compositionally biased toward polar residues: residues S374–P385 and F396–I408.

It is found in the nucleus. Myb-like transcriptional regulator; part of the gene cluster that mediates the biosynthesis of the phthalide-terpenoid hybrid 11'-O-desmethylfendlerol. This is Myb-like transcriptional regulator mfmK from Annulohypoxylon moriforme (Filamentous fungus).